A 121-amino-acid polypeptide reads, in one-letter code: Holo-[acyl-carrier-protein] synthase (121 aa).

Positions 5 and 50 each coordinate Mg(2+).

The protein belongs to the P-Pant transferase superfamily. AcpS family. It depends on Mg(2+) as a cofactor.

The protein localises to the cytoplasm. The enzyme catalyses apo-[ACP] + CoA = holo-[ACP] + adenosine 3',5'-bisphosphate + H(+). Transfers the 4'-phosphopantetheine moiety from coenzyme A to a Ser of acyl-carrier-protein. This Sulfurimonas denitrificans (strain ATCC 33889 / DSM 1251) (Thiomicrospira denitrificans (strain ATCC 33889 / DSM 1251)) protein is Holo-[acyl-carrier-protein] synthase.